The chain runs to 145 residues: Hemoglobin subunit beta-1 (145 aa).

Positions 1-145 constitute a Globin domain; that stretch reads TFTNDESQHI…VEAALATGYH (145 aa). Heme b is bound by residues histidine 62 and histidine 91.

The protein belongs to the globin family. In terms of assembly, major hemoglobin is a tetramer of two alpha-1 chains and two beta-1 chains. Red blood cells.

In terms of biological role, involved in oxygen transport from the lung to the various peripheral tissues. The polypeptide is Hemoglobin subunit beta-1 (HBB1) (Triturus cristatus (Great crested newt)).